Consider the following 661-residue polypeptide: MILKNNIAYAENEQEKLSFLSHITWDDAHQRNDKNQFKGAKLIQEFVKHLPHKPGVYRMVDENGKVLYVGKARNLKKRVSNYTREQGHNNRITRMIRATSHMEFVVTHTEIEALLLEANLIKRLHPRFNVLLRDDKSFPYIIITDDHRAPALYKHRGARTRKAHYFGPFASSSAVTQTINVLQRAFLLRTCTDSVLENRTRPCLLYQIKRCSAPCTHEISDRDYRELVKGAKSFLSGKSQSIKNDMVQAMHKAAKNFDFEQAAAYRDRLSALSHIQSHQGINPQTIEEADVFAIAQKEGISCIQVFFFRMGQNWGNRAYFPKADPSFSSSEILASFLSQFYDDKPLPKLILLSESIEDKTLLAEAFSLKANRKISLSLPKQGERKTLVNYAYINAHETLGHKLAETATHTKLFQGIAEIFQLPHTPCRIEIYDNSHIMGTNAVGAMIVAGKNGFIKNQYRKFNIRSTDITPGDDFGMMKEVIKRRFSRLIKEHGLPHESKNIQSKDDASFPIWPDLILIDGGKGQINSVHTILSELGLDNFMTVVGIAKGADRRAGRERFFIKGKTPFTLPPCDPILYFLQRLRDEAHRFAIGTHRAKRKKETLKNPLDEIENIGPTRKRALLHHFGSAKAIASASLEDLTKVIGISTTIAQKIYNHFNEK.

Residues H52–V130 form the GIY-YIG domain. A UVR domain is found at Q240–I275.

The protein belongs to the UvrC family. In terms of assembly, interacts with UvrB in an incision complex.

The protein resides in the cytoplasm. The UvrABC repair system catalyzes the recognition and processing of DNA lesions. UvrC both incises the 5' and 3' sides of the lesion. The N-terminal half is responsible for the 3' incision and the C-terminal half is responsible for the 5' incision. This is UvrABC system protein C from Bartonella henselae (strain ATCC 49882 / DSM 28221 / CCUG 30454 / Houston 1) (Rochalimaea henselae).